The chain runs to 245 residues: Fibroblast growth factor 13 (245 aa).

Positions 1–36 are disordered; it reads MAAAIASSLIRQKRQAREREKSNACKCVSSPSKGKT. A mediates targeting to the nucleus region spans residues 1-62; sequence MAAAIASSLI…GSKKRRRRRP (62 aa). The interval 67-201 is mediates interaction with sodium channels; that stretch reads KGIVTKLYSR…AHFLPKPLKV (135 aa). Residues 157–164 form a tubulin-binding domain necessary and sufficient for tubulin-binding region; sequence SMIYRQQQ. Residue serine 208 is modified to Phosphoserine. Residues 213-245 form a disordered region; sequence TEFSRSGSGTPTKSRSVSGVLNGGKSMSHNEST. Residues 215-245 are compositionally biased toward polar residues; it reads FSRSGSGTPTKSRSVSGVLNGGKSMSHNEST.

The protein belongs to the heparin-binding growth factors family. In terms of assembly, interacts with SCN8A; regulates SCN8A activity. Interacts with SCN1A; may regulate SCN1A activity. Interacts with SCN5A; the interaction is direct and may regulate SNC5A density at membranes and function. May also interact with SCN2A and SCN11A. Interacts with MAPK8IP2; may regulate the MAPK8IP2 scaffolding activity. May be phosphorylated. Detected in brain, eye and heart. In brain, the different isoforms display different patterns of expression. Expressed in brain and heart (at protein level). Isoform 3 is highly expressed in cardiac myocytes while isoform 1 is the most abundant in brain.

The protein localises to the cell projection. It is found in the filopodium. Its subcellular location is the growth cone. It localises to the dendrite. The protein resides in the cell membrane. The protein localises to the sarcolemma. It is found in the cytoplasm. Its subcellular location is the nucleus. Microtubule-binding protein which directly binds tubulin and is involved in both polymerization and stabilization of microtubules. Through its action on microtubules, may participate to the refinement of axons by negatively regulating axonal and leading processes branching. Plays a crucial role in neuron polarization and migration in the cerebral cortex and the hippocampus. Regulates voltage-gated sodium channel transport and function. May also play a role in MAPK signaling. Required for the development of axonal initial segment-targeting inhibitory GABAergic synapses made by chandelier neurons. In terms of biological role, seems not to be involved in neuroblast polarization and migration but regulates axon branching. The polypeptide is Fibroblast growth factor 13 (Mus musculus (Mouse)).